The primary structure comprises 124 residues: Sulfur globule protein CV2 (124 aa).

The first 22 residues, 1 to 22 (MKKLATAAAVAALLGASASASA), serve as a signal peptide directing secretion.

As to quaternary structure, the protein envelope of the sulfur globules is composed of the three different proteins CV1, CV2 and CV3.

Its function is as follows. Structural protein of the sulfur globules, which are intracellular globules that serve for sulfur storage in purple sulfur bacteria. In Allochromatium vinosum (strain ATCC 17899 / DSM 180 / NBRC 103801 / NCIMB 10441 / D) (Chromatium vinosum), this protein is Sulfur globule protein CV2 (sgpB).